The sequence spans 219 residues: 7-carboxy-7-deazaguanine synthase (219 aa).

Residues 22 to 24 (IQG) and arginine 37 contribute to the substrate site. In terms of domain architecture, Radical SAM core spans 28-219 (LVGLPSVFIR…PQVHKCFDLK (192 aa)). Positions 41, 45, and 48 each coordinate [4Fe-4S] cluster. Threonine 81 is a substrate binding site. S-adenosyl-L-methionine contacts are provided by residues glycine 83 and 130–132 (SPK).

Belongs to the radical SAM superfamily. 7-carboxy-7-deazaguanine synthase family. Homodimer. Requires [4Fe-4S] cluster as cofactor. It depends on S-adenosyl-L-methionine as a cofactor. The cofactor is Mg(2+).

The enzyme catalyses 6-carboxy-5,6,7,8-tetrahydropterin + H(+) = 7-carboxy-7-deazaguanine + NH4(+). The protein operates within purine metabolism; 7-cyano-7-deazaguanine biosynthesis. Its function is as follows. Catalyzes the complex heterocyclic radical-mediated conversion of 6-carboxy-5,6,7,8-tetrahydropterin (CPH4) to 7-carboxy-7-deazaguanine (CDG), a step common to the biosynthetic pathways of all 7-deazapurine-containing compounds. In Aquifex aeolicus (strain VF5), this protein is 7-carboxy-7-deazaguanine synthase.